A 341-amino-acid chain; its full sequence is DNA-directed RNA polymerase subunit alpha (341 aa).

Residues 1–223 (MEQKRPQLKA…DELSVFGNVE (223 aa)) form an alpha N-terminal domain (alpha-NTD) region. The tract at residues 268–341 (PQPFPTDQDT…LAQFGLALRD (74 aa)) is alpha C-terminal domain (alpha-CTD).

It belongs to the RNA polymerase alpha chain family. Homodimer. The RNAP catalytic core consists of 2 alpha, 1 beta, 1 beta' and 1 omega subunit. When a sigma factor is associated with the core the holoenzyme is formed, which can initiate transcription.

It catalyses the reaction RNA(n) + a ribonucleoside 5'-triphosphate = RNA(n+1) + diphosphate. In terms of biological role, DNA-dependent RNA polymerase catalyzes the transcription of DNA into RNA using the four ribonucleoside triphosphates as substrates. The chain is DNA-directed RNA polymerase subunit alpha from Deinococcus radiodurans (strain ATCC 13939 / DSM 20539 / JCM 16871 / CCUG 27074 / LMG 4051 / NBRC 15346 / NCIMB 9279 / VKM B-1422 / R1).